Consider the following 370-residue polypeptide: DNA polymerase IV (370 aa).

Positions 14 to 198 (IIHIDMDAFF…LPIEKFYGVG (185 aa)) constitute a UmuC domain. 2 residues coordinate Mg(2+): aspartate 18 and aspartate 116. Glutamate 117 is an active-site residue.

The protein belongs to the DNA polymerase type-Y family. Monomer. The cofactor is Mg(2+).

The protein resides in the cytoplasm. The enzyme catalyses DNA(n) + a 2'-deoxyribonucleoside 5'-triphosphate = DNA(n+1) + diphosphate. In terms of biological role, poorly processive, error-prone DNA polymerase involved in untargeted mutagenesis. Copies undamaged DNA at stalled replication forks, which arise in vivo from mismatched or misaligned primer ends. These misaligned primers can be extended by PolIV. Exhibits no 3'-5' exonuclease (proofreading) activity. May be involved in translesional synthesis, in conjunction with the beta clamp from PolIII. The protein is DNA polymerase IV of Streptococcus mutans serotype c (strain ATCC 700610 / UA159).